The sequence spans 414 residues: Multifunctional CCA protein (414 aa).

ATP-binding residues include Gly-8 and Arg-11. 2 residues coordinate CTP: Gly-8 and Arg-11. Mg(2+) is bound by residues Glu-21 and Asp-23. ATP is bound by residues Arg-91, Arg-137, and Arg-140. CTP is bound by residues Arg-91, Arg-137, and Arg-140. The 102-residue stretch at 228–329 (TGIHTMMTVA…LKLFDAIDVW (102 aa)) folds into the HD domain.

This sequence belongs to the tRNA nucleotidyltransferase/poly(A) polymerase family. Bacterial CCA-adding enzyme type 1 subfamily. Monomer. Can also form homodimers and oligomers. Requires Mg(2+) as cofactor. Ni(2+) is required as a cofactor.

The enzyme catalyses a tRNA precursor + 2 CTP + ATP = a tRNA with a 3' CCA end + 3 diphosphate. It carries out the reaction a tRNA with a 3' CCA end + 2 CTP + ATP = a tRNA with a 3' CCACCA end + 3 diphosphate. Catalyzes the addition and repair of the essential 3'-terminal CCA sequence in tRNAs without using a nucleic acid template. Adds these three nucleotides in the order of C, C, and A to the tRNA nucleotide-73, using CTP and ATP as substrates and producing inorganic pyrophosphate. tRNA 3'-terminal CCA addition is required both for tRNA processing and repair. Also involved in tRNA surveillance by mediating tandem CCA addition to generate a CCACCA at the 3' terminus of unstable tRNAs. While stable tRNAs receive only 3'-terminal CCA, unstable tRNAs are marked with CCACCA and rapidly degraded. In Pectobacterium carotovorum subsp. carotovorum (strain PC1), this protein is Multifunctional CCA protein.